Reading from the N-terminus, the 241-residue chain is Uridylate kinase (241 aa).

12–15 (KLSG) contacts ATP. The segment at 20-25 (GDKGVG) is involved in allosteric activation by GTP. Gly54 contacts UMP. Gly55 and Arg59 together coordinate ATP. Residues Asp74 and 135-142 (IGSPYFST) each bind UMP. ATP is bound by residues Asn163, Tyr169, and Asp172.

The protein belongs to the UMP kinase family. As to quaternary structure, homohexamer.

It localises to the cytoplasm. The enzyme catalyses UMP + ATP = UDP + ADP. It functions in the pathway pyrimidine metabolism; CTP biosynthesis via de novo pathway; UDP from UMP (UMPK route): step 1/1. Allosterically activated by GTP. Inhibited by UTP. Its function is as follows. Catalyzes the reversible phosphorylation of UMP to UDP. This is Uridylate kinase from Streptococcus gordonii (strain Challis / ATCC 35105 / BCRC 15272 / CH1 / DL1 / V288).